Here is a 384-residue protein sequence, read N- to C-terminus: 5-cytosine rRNA methyltransferase NSUN4 (384 aa).

Residues 1 to 25 (MAALVVRGVRDMLKRADFATVPRRQ) constitute a mitochondrion transit peptide. S-adenosyl-L-methionine contacts are provided by glycine 185, glycine 186, lysine 187, and aspartate 204. Residue serine 206 is modified to Phosphoserine. S-adenosyl-L-methionine contacts are provided by arginine 209, aspartate 237, glycine 238, and aspartate 255. Cysteine 310 (nucleophile) is an active-site residue.

It belongs to the class I-like SAM-binding methyltransferase superfamily. RsmB/NOP family. As to quaternary structure, heterodimer with MTERFD2/MTERF4; this interaction seems to be required for NSUN4 recruitment to the mitochondrial large ribosomal subunit.

Its subcellular location is the mitochondrion. The enzyme catalyses a cytidine in rRNA + S-adenosyl-L-methionine = a 5-methylcytidine in rRNA + S-adenosyl-L-homocysteine + H(+). The catalysed reaction is a cytidine in mRNA + S-adenosyl-L-methionine = a 5-methylcytidine in mRNA + S-adenosyl-L-homocysteine + H(+). Mitochondrial RNA cytosine C(5)-methyltransferase that methylates cytosine to 5-methylcytosine (m5C) in various RNAs, such as rRNAs, mRNAs and some long non-coding RNAs (lncRNAs). Involved in mitochondrial ribosome small subunit (SSU) maturation by catalyzing methylation of mitochondrial 12S rRNA; the function is independent of MTERFD2/MTERF4 and assembled mitochondrial ribosome large subunit (LSU). Targeted to LSU by MTERFD2/MTERF4 and probably is involved in a final step in ribosome biogenesis to ensure that SSU and LSU are assembled. In vitro can methylate 16S rRNA of the LSU; the methylation is enhanced by MTERFD/MTERF4. Also acts as a regulator of innate immunity by marking double-stranded mitochondrial RNAs(mt-dsRNAs) generated in response to stress: catalyzes m5C modification on mitochondrial RNAs, such as a mRNAs and lncRNAs, with a preference for the termini of light-strand lncRNAs, promoting their degradation and cytosolic release. Modified light-strand lncRNAs are then recognized by C1QBP reader and recruited to the mitochondrial degradosome complex, which promotes their degradation. The chain is 5-cytosine rRNA methyltransferase NSUN4 (NSUN4) from Bos taurus (Bovine).